The following is a 447-amino-acid chain: Putative branched-chain amino acid carrier protein SAR1419 (447 aa).

A run of 12 helical transmembrane segments spans residues 6-26 (WVIG…IFPP), 40-60 (ILAF…VGAL), 74-94 (PKFS…LFAI), 114-134 (SSIA…YICL), 143-163 (IGSL…IKAY), 193-213 (GYLT…VNAV), 229-249 (LTAG…LGYI), 290-310 (LLGI…IVAV), 326-346 (FVLV…NAVI), 350-370 (IPVL…ILIA), 382-402 (IPVI…LGWL), and 417-437 (LEWF…GIFV).

This sequence belongs to the branched chain amino acid transporter family.

The protein resides in the cell membrane. Component of the transport system for branched-chain amino acids (leucine, isoleucine and valine), which is coupled to a proton motive force (Potential). Contributes to NaCl tolerance. This is Putative branched-chain amino acid carrier protein SAR1419 from Staphylococcus aureus (strain MRSA252).